A 530-amino-acid polypeptide reads, in one-letter code: Glutamyl-tRNA reductase 2, chloroplastic (530 aa).

A chloroplast-targeting transit peptide spans 1–64 (MAVSSAFVVT…RCEISPSNKA (64 aa)). Substrate is bound by residues 134 to 137 (TCNR), Ser194, 199 to 201 (EGQ), and Gln205. Cys135 acts as the Nucleophile in catalysis. 277-282 (GAGKMG) is an NADP(+) binding site.

Belongs to the glutamyl-tRNA reductase family. Expressed in roots and flowers. Detected in leaves, hypocotyls and cotyledons.

It is found in the plastid. Its subcellular location is the chloroplast. The catalysed reaction is (S)-4-amino-5-oxopentanoate + tRNA(Glu) + NADP(+) = L-glutamyl-tRNA(Glu) + NADPH + H(+). It functions in the pathway porphyrin-containing compound metabolism; protoporphyrin-IX biosynthesis; 5-aminolevulinate from L-glutamyl-tRNA(Glu): step 1/2. The protein operates within porphyrin-containing compound metabolism; chlorophyll biosynthesis. In terms of biological role, catalyzes the NADPH-dependent reduction of glutamyl-tRNA(Glu) to glutamate 1-semialdehyde (GSA). Probably involved in wound-induced supply of heme to defensive hemoproteins outside plastids. The protein is Glutamyl-tRNA reductase 2, chloroplastic (HEMA2) of Arabidopsis thaliana (Mouse-ear cress).